Here is a 104-residue protein sequence, read N- to C-terminus: Large ribosomal subunit protein uL24 (104 aa).

Belongs to the universal ribosomal protein uL24 family. As to quaternary structure, part of the 50S ribosomal subunit.

In terms of biological role, one of two assembly initiator proteins, it binds directly to the 5'-end of the 23S rRNA, where it nucleates assembly of the 50S subunit. One of the proteins that surrounds the polypeptide exit tunnel on the outside of the subunit. The chain is Large ribosomal subunit protein uL24 from Rhodopseudomonas palustris (strain BisB5).